We begin with the raw amino-acid sequence, 447 residues long: MTKVITRFAPSPTGMLHVGNIRAALLNWLYAKKHNGQFILRFDDTDLERSKQEYKDAIEEDLKFLNIHWDQTFNQLSRLSRYDAIKNLLLDKKRLYACYETPEELELKRKFQLSKGLPPIYDRASLNLTEEQAKKYIEQRRKPHYRFLVNHEPISWHDMIKGEVKYDGKALSDPIVIRADGSMTYMLCSVIDDIDYDITHIIRGEDHVSNTAIQMQMFEALNTTPPTFGHLSLIINKDEKISKRVGGFEIATLRKEIGIEAMAIASFFSLLGSSAQILPYKSMEKLANQFEISSFSKSPTIYQPEDLERLNHKLLISLDFDTVKERLKEIDAEYIDENFWLSVSPNLQTLRDVKDWWEICHQTPNVETLNLDKEYLKQAAELLPKGEITKDSWSIWTKEITNITGRKGKELFLPLRLALTARESGPEIASVLPLIDREEIIKRLTSA.

Positions 10–20 match the 'HIGH' region motif; the sequence is PSPTGMLHVGN. A 'KMSKS' region motif is present at residues 240–244; the sequence is KISKR. Lysine 243 contributes to the ATP binding site.

This sequence belongs to the class-I aminoacyl-tRNA synthetase family. Glutamate--tRNA ligase type 1 subfamily. As to quaternary structure, monomer.

The protein localises to the cytoplasm. The catalysed reaction is tRNA(Glu) + L-glutamate + ATP = L-glutamyl-tRNA(Glu) + AMP + diphosphate. Its function is as follows. Catalyzes the attachment of glutamate to tRNA(Glu) in a two-step reaction: glutamate is first activated by ATP to form Glu-AMP and then transferred to the acceptor end of tRNA(Glu). This Rickettsia conorii (strain ATCC VR-613 / Malish 7) protein is Glutamate--tRNA ligase 1.